Here is a 515-residue protein sequence, read N- to C-terminus: Integrator complex subunit 14 (515 aa).

Residues 2–204 enclose the VWFA domain; it reads PTVVVMDVSL…KNVQSMFGKL (203 aa). Mg(2+)-binding residues include serine 10, serine 12, and threonine 86. Lysine 418 carries the post-translational modification N6-acetyllysine.

It belongs to the Integrator subunit 14 family. Component of the Integrator complex, composed of core subunits INTS1, INTS2, INTS3, INTS4, INTS5, INTS6, INTS7, INTS8, INTS9/RC74, INTS10, INTS11/CPSF3L, INTS12, INTS13, INTS14 and INTS15. The core complex associates with protein phosphatase 2A subunits PPP2CA and PPP2R1A, to form the Integrator-PP2A (INTAC) complex. INTS14 is part of the tail subcomplex, composed of INTS10, INTS13, INTS14 and INTS15.

The protein localises to the nucleus. Its function is as follows. Component of the integrator complex, a multiprotein complex that terminates RNA polymerase II (Pol II) transcription in the promoter-proximal region of genes. The integrator complex provides a quality checkpoint during transcription elongation by driving premature transcription termination of transcripts that are unfavorably configured for transcriptional elongation: the complex terminates transcription by (1) catalyzing dephosphorylation of the C-terminal domain (CTD) of Pol II subunit POLR2A/RPB1 and SUPT5H/SPT5, (2) degrading the exiting nascent RNA transcript via endonuclease activity and (3) promoting the release of Pol II from bound DNA. The integrator complex is also involved in terminating the synthesis of non-coding Pol II transcripts, such as enhancer RNAs (eRNAs), small nuclear RNAs (snRNAs), telomerase RNAs and long non-coding RNAs (lncRNAs). Within the integrator complex, INTS14 is part of the integrator tail module that acts as a platform for the recruitment of transcription factors at promoters. The protein is Integrator complex subunit 14 of Rattus norvegicus (Rat).